A 387-amino-acid polypeptide reads, in one-letter code: Ferrochelatase (387 aa).

Fe cation is bound by residues His196 and Glu277.

It belongs to the ferrochelatase family.

It is found in the cytoplasm. It carries out the reaction heme b + 2 H(+) = protoporphyrin IX + Fe(2+). It functions in the pathway porphyrin-containing compound metabolism; protoheme biosynthesis; protoheme from protoporphyrin-IX: step 1/1. In terms of biological role, catalyzes the ferrous insertion into protoporphyrin IX. This is Ferrochelatase from Rippkaea orientalis (strain PCC 8801 / RF-1) (Cyanothece sp. (strain PCC 8801)).